Reading from the N-terminus, the 121-residue chain is Small ribosomal subunit protein uS13 (121 aa).

Positions Arg-90–Lys-121 are disordered. Residues Ala-106–Lys-121 show a composition bias toward basic residues.

Belongs to the universal ribosomal protein uS13 family. Part of the 30S ribosomal subunit. Forms a loose heterodimer with protein S19. Forms two bridges to the 50S subunit in the 70S ribosome.

Functionally, located at the top of the head of the 30S subunit, it contacts several helices of the 16S rRNA. In the 70S ribosome it contacts the 23S rRNA (bridge B1a) and protein L5 of the 50S subunit (bridge B1b), connecting the 2 subunits; these bridges are implicated in subunit movement. Contacts the tRNAs in the A and P-sites. The sequence is that of Small ribosomal subunit protein uS13 from Enterococcus faecalis (strain ATCC 700802 / V583).